The primary structure comprises 341 residues: Phosphoribosylformylglycinamidine cyclo-ligase (341 aa).

This sequence belongs to the AIR synthase family.

The protein localises to the cytoplasm. It carries out the reaction 2-formamido-N(1)-(5-O-phospho-beta-D-ribosyl)acetamidine + ATP = 5-amino-1-(5-phospho-beta-D-ribosyl)imidazole + ADP + phosphate + H(+). It functions in the pathway purine metabolism; IMP biosynthesis via de novo pathway; 5-amino-1-(5-phospho-D-ribosyl)imidazole from N(2)-formyl-N(1)-(5-phospho-D-ribosyl)glycinamide: step 2/2. The chain is Phosphoribosylformylglycinamidine cyclo-ligase from Agathobacter rectalis (strain ATCC 33656 / DSM 3377 / JCM 17463 / KCTC 5835 / VPI 0990) (Eubacterium rectale).